Consider the following 449-residue polypeptide: Putative tartrate transporter (449 aa).

Helical transmembrane passes span 34-54 (IVPF…NIGF), 64-84 (GFSS…YFLF), 99-119 (IWIA…AFVQ), 130-150 (LLGV…SFWF), 156-176 (AAVT…GSPI), 194-214 (WMFL…LFFL), 259-279 (VIAL…LGIW), 292-312 (IEVG…MVLW), 336-356 (GLAF…LTIV), 367-387 (LWSM…IATI), and 414-434 (GGLY…LILA).

Belongs to the major facilitator superfamily. Phthalate permease family.

The protein resides in the cell membrane. In terms of biological role, component of the tartrate utilization system and may allow entry of tartrate and tartrate dehydrogenase. The polypeptide is Putative tartrate transporter (ttuB) (Agrobacterium vitis (Rhizobium vitis)).